The primary structure comprises 185 residues: uncharacterized protein (185 aa).

A signal peptide spans 1–29; that stretch reads MKNQEIIEVKSKMFLRIWAFVGSAGMGLA. A lipid anchor (N-palmitoyl cysteine) is attached at Cys-30. A lipid anchor (S-diacylglycerol cysteine) is attached at Cys-30. A helical transmembrane segment spans residues 45 to 67; it reads YLLAIPAGFLFTLFCLYLFIIFF.

This sequence to B.subtilis YfjE.

It is found in the cell membrane. This is an uncharacterized protein from Bacillus subtilis (strain 168).